We begin with the raw amino-acid sequence, 258 residues long: Hemin import ATP-binding protein HmuV (258 aa).

In terms of domain architecture, ABC transporter spans 1–238; that stretch reads MLDIDVSNLS…DILERTYRTP (238 aa). 34–41 provides a ligand contact to ATP; it reads GENGAGKS.

Belongs to the ABC transporter superfamily. Heme (hemin) importer (TC 3.A.1.14.5) family. The complex is composed of two ATP-binding proteins (HmuV), two transmembrane proteins (HmuU) and a solute-binding protein (HmuT).

Its subcellular location is the cell inner membrane. Its function is as follows. Part of the ABC transporter complex HmuTUV involved in hemin import. Responsible for energy coupling to the transport system. The polypeptide is Hemin import ATP-binding protein HmuV (Idiomarina loihiensis (strain ATCC BAA-735 / DSM 15497 / L2-TR)).